The primary structure comprises 719 residues: MKEFFATCPKGLENLLADELTTLGAEQVRETVAGVHFKGELAIGYKACLWSRFASRIVLVLSEFQMNDDLDLYLGAHTIPWEEHFSGTSTIAVDFTGTNPAIRNTQYGALKIKDAIVDRFTKRGHVRPDVDKKAPDIRIMAHLGKGKANITLDLSGPALHQRFYRQGTGEAPLKENLACAMIARSGWAGEPMMDPMCGSGTLLIEAAFIAADMAPALRRERFGFDRWLQHDSELWQSLMMEAQVRAKRGMQRCEVKLFGCDADPRVLMKARDNAKAAGVAHLITFKQADVTQLENPLPMPAVVEGEVSQEEARQVGMLISNPPYGERLGEFPALLEVHQALGDALRRGFQGWRVSILSASPELLSCLRLRADKQYRLFNGALECQLRNYQIALDSVASQKEVAQDFANRLRKNLKTLEKWASKEGIDCYRLYDADLPEYNAAIDRYQDYLVVQEYAAPKDIPAQKTRQRLLDMVQAAIKVTGMDGEKVILKVRERQEGKQQYQKLAAEQHRMEVQEYGARLWVNLYDYLDTGLFLDHRQTRRMLGQMAKGKRFLNLFAYTGSATVHAGLGGASETTTVDMSHTYLNWAQDNMRLNSLVGRQHKFVQADCLKWLSEADDQYDLIFIDPPTFSNSKRMDESFDVQRDHLLLMQHLKRLLAADGTLVFSNNKRHFKMDLAGLEAAGLKAQNITSKTRPKDFERNQHIHNCWIITHAEAPAEA.

In terms of domain architecture, THUMP spans 43 to 154; the sequence is IGYKACLWSR…KGKANITLDL (112 aa).

Belongs to the methyltransferase superfamily. RlmKL family.

Its subcellular location is the cytoplasm. The enzyme catalyses guanosine(2445) in 23S rRNA + S-adenosyl-L-methionine = N(2)-methylguanosine(2445) in 23S rRNA + S-adenosyl-L-homocysteine + H(+). The catalysed reaction is guanosine(2069) in 23S rRNA + S-adenosyl-L-methionine = N(2)-methylguanosine(2069) in 23S rRNA + S-adenosyl-L-homocysteine + H(+). Specifically methylates the guanine in position 2445 (m2G2445) and the guanine in position 2069 (m7G2069) of 23S rRNA. This chain is Ribosomal RNA large subunit methyltransferase K/L, found in Aeromonas salmonicida (strain A449).